We begin with the raw amino-acid sequence, 304 residues long: Hairy/enhancer-of-split related with YRPW motif protein 1 (304 aa).

The segment at 1–52 (MKRAHPEYSSSDSELDETIEVEKESADENGNLSSALGSMSPTTSSQILARKR) is disordered. Polar residues predominate over residues 28–47 (ENGNLSSALGSMSPTTSSQI). The tract at residues 48-117 (LARKRRRGII…GGKGYFDAHA (70 aa)) is transcriptional repression and interaction with NCOR1 and SIN3A. The bHLH domain maps to 49 to 104 (ARKRRRGIIEKRRRDRINNSLSELRRLVPSAFEKQGSAKLEKAEILQMTVDHLKML). In terms of domain architecture, Orange spans 122–158 (YRSLGFRECLAEVARYLSIIEGLDASDPLRVRLVSHL). The disordered stretch occupies residues 196–234 (LPQNGHGNAGTTASPTEPHHQGRLGSAHPEAPALRAPPS). Residues 200–210 (GHGNAGTTASP) are compositionally biased toward polar residues. Residues 294-297 (YRPW) carry the YRPW motif motif.

This sequence belongs to the HEY family. Self-associates. Interacts with HES1 and HEYL. Interacts with HDAC1, NCOR1 and SIN3A. Interacts with GATA4 and GATA6. Interacts with CCDC89/BOIP. Expressed in the somitic mesoderm, the central nervous system, the kidney, the heart, nasal epithelium, and limbs.

Its subcellular location is the nucleus. Its function is as follows. Transcriptional repressor which binds preferentially to the canonical E box sequence 5'-CACGTG-3'. Downstream effector of Notch signaling required for cardiovascular development. Specifically required for the Notch-induced endocardial epithelial to mesenchymal transition, which is itself criticial for cardiac valve and septum development. May be required in conjunction with HEY2 to specify arterial cell fate or identity. Promotes maintenance of neuronal precursor cells and glial versus neuronal fate specification. Represses transcription by the cardiac transcriptional activators GATA4 and GATA6 and by the neuronal bHLH factors ASCL1/MASH1 and NEUROD4/MATH3. Involved in the regulation of liver cancer cells self-renewal. The chain is Hairy/enhancer-of-split related with YRPW motif protein 1 (HEY1) from Homo sapiens (Human).